We begin with the raw amino-acid sequence, 300 residues long: ATP-dependent (S)-NAD(P)H-hydrate dehydratase (300 aa).

The 283-residue stretch at 7-289 folds into the YjeF C-terminal domain; sequence IEARLKSIIP…ESIPSVFDQV (283 aa). (6S)-NADPHX contacts are provided by residues glycine 107 and 160-166; that span reads NVMEYRR. Residues 194 to 198 and 213 to 222 contribute to the ATP site; these read KGQVD and GSPRRCGGQG. Aspartate 223 serves as a coordination point for (6S)-NADPHX.

It belongs to the NnrD/CARKD family. It depends on Mg(2+) as a cofactor.

It catalyses the reaction (6S)-NADHX + ATP = ADP + phosphate + NADH + H(+). It carries out the reaction (6S)-NADPHX + ATP = ADP + phosphate + NADPH + H(+). Functionally, catalyzes the dehydration of the S-form of NAD(P)HX at the expense of ATP, which is converted to ADP. Together with NAD(P)HX epimerase, which catalyzes the epimerization of the S- and R-forms, the enzyme allows the repair of both epimers of NAD(P)HX, a damaged form of NAD(P)H that is a result of enzymatic or heat-dependent hydration. In Entamoeba histolytica (strain ATCC 30459 / HM-1:IMSS / ABRM), this protein is ATP-dependent (S)-NAD(P)H-hydrate dehydratase.